Here is a 2517-residue protein sequence, read N- to C-terminus: MVGERHAGDLMVPLGPRLQAYPEELIRQRPGHDGHPEYLIRWSVLKCGEVGKVGVEEGKAEHILMWLSAPEVYANCPGLLGERALSKGLQHEPAGVSGSFPRDPGGLDEVAMGEMEADVQALVRRAARQLAESGTPSLTAAVLHTIHVLSAYASIGPLTGVFRETGALDLLMHMLCNPEPQIRRSAGKMLQALAAHDAGSRAHVLLSLSQQDGIEQHMDFDSRYTLLELFAETTSSEEHCMAFEGIHLPQIPGKLLFSLVKRYLCVTSLLDQLNSSPELGAGDQSSPCATREKSRGQRELEFSMAVGNLISELVRSMGWARNLSEQGMSPPRPTRSIFQPYISGPSLLLPTIVTTPRRQGWVFRQRSEFSSRSGYGEYVQQTLQPGMRVRMLDDYEEISAGDEGEFRQSNNGIPPVQVFWQSTGRTYWVHWHMLEILGPEEATEDKASAAVEKGAGATVLGTAFPSWDWNPMDGLYPLPYLQPEPQKNERVGYLTQAEWWELLFFIKKLDLCEQQPIFQNLWKNLDETLGEKALGEISVSVEMAESLLQVLSSRFEGSTLNDLLNSQIYTKYGLLSNEPSSSSTSRNHSCTPDPEEESKSEASFSEEETESLKAKAEAPKTEAEPTKTRTETPMAQSDSQLFNQLLVTEGMTLPTEMKEAASEMARALRGPGPRSSLDQHVAAVVATVQISSLDTNLQLSGLSALSQAVEEVTERDHPLVRPDRSLREKLVKMLVELLTNQVGEKMVVVQALRLLYLLMTKHEWRPLFAREGGIYAVLVCMQEYKTSVLVQQAGLAALKMLAVASSSEIPTFVTGRDSIHSLFDAQMTREIFASIDSATRPGSESLLLTVPAAVILMLNTEGCSSAARNGLLLLNLLLCNHHTLGDQIITQELRDTLFRHSGIAPRTEPMPTTRTILMMLLNRYSEPPGSPERAALETPIIQGQDGSPELLIRSLVGGPSAELLLDLERVLCREGSPGGAVRPLLKRLQQETQPFLLLLRTLDAPGPNKTLLLSVLRVITRLLDFPEAMVLPWHEVLEPCLNCLSGPSSDSEIVQELTCFLHRLASMHKDYAVVLCCLGAKEILSKVLDKHSAQLLLGCELRDLVTECEKYAQLYSNLTSSILAGCIQMVLGQIEDHRRTHQPINIPFFDVFLRHLCQGSSVEVKEDKCWEKVEVSSNPHRASKLTDHNPKTYWESNGSTGSHYITLHMHRGVLVRQLTLLVASEDSSYMPARVVVFGGDSTSCIGTELNTVNVMPSASRVILLENLNRFWPIIQIRIKRCQQGGIDTRVRGVEVLGPKPTFWPLFREQLCRRTCLFYTIRAQAWSRDIAEDHRRLLQLCPRLNRVLRHEQNFADRFLPDDEAAQALGKTCWEALVSPLVQNITSPDAEGVSALGWLLDQYLEQRETSRNPLSRAASFASRVRRLCHLLVHVEPPPGPSPEPSTRPFSKNSKGRDRSPAPSPVLPSSSLRNITQCWLSVVQEQVSRFLAAAWRAPDFVPRYCKLYEHLQRAGSELFGPRAAFMLALRSGFSGALLQQSFLTAAHMSEQFARYIDQQIQGGLIGGAPGVEMLGQLQRHLEPIMVLSGLELATTFEHFYQHYMADRLLSFGSSWLEGAVLEQIGLCFPNRLPQLMLQSLSTSEELQRQFHLFQLQRLDKLFLEQEDEEEKRLEEEEEEEEEEEAEKELFIEDPSPAISILVLSPRCWPVSPLCYLYHPRKCLPTEFCDALDRFSSFYSQSQNHPVLDMGPHRRLQWTWLGRAELQFGKQILHVSTVQMWLLLKFNQTEEVSVETLLKDSDLSPELLLQALVPLTSGNGPLTLHEGQDFPHGGVLRLHEPGPQRSGEALWLIPPQAYLNVEKDEGRTLEQKRNLLSCLLVRILKAHGEKGLHIDQLVCLVLEAWQKGPNPPGTLGHTVAGGVACTSTDVLSCILHLLGQGYVKRRDDRPQILMYAAPEPMGPCRGQADVPFCGSQSETSKPSPEAVATLASLQLPAGRTMSPQEVEGLMKQTVRQVQETLNLEPDVAQHLLAHSHWGAEQLLQSYSEDPEPLLLAAGLCVHQAQAVPVRPDHCPVCVSPLGCDDDLPSLCCMHYCCKSCWNEYLTTRIEQNLVLNCTCPIADCPAQPTGAFIRAIVSSPEVISKYEKALLRGYVESCSNLTWCTNPQGCDRILCRQGLGCGTTCSKCGWASCFNCSFPEAHYPASCGHMSQWVDDGGYYDGMSVEAQSKHLAKLISKRCPSCQAPIEKNEGCLHMTCAKCNHGFCWRCLKSWKPNHKDYYNCSAMVSKAARQEKRFQDYNERCTFHHQAREFAVNLRNRVSAIHEVPPPRSFTFLNDACQGLEQARKVLAYACVYSFYSQDAEYMDVVEQQTENLELHTNALQILLEETLLRCRDLASSLRLLRADCLSTGMELLRRIQERLLAILQHSAQDFRVGLQSPSVEAWEAKGPNMPGSQPQASSGPEAEEEEEDDEDDVPEWQQDEFDEELDNDSFSYDESENLDQETFFFGDEEEDEDEAYD.

Lysine 87 participates in a covalent cross-link: Glycyl lysine isopeptide (Lys-Gly) (interchain with G-Cter in ubiquitin). Over residues 276–288 (SPELGAGDQSSPC) the composition is skewed to polar residues. Positions 276 to 296 (SPELGAGDQSSPCATREKSRG) are disordered. A CPH domain is found at 366–439 (RSEFSSRSGY…HWHMLEILGP (74 aa)). Residues 576–589 (SNEPSSSSTSRNHS) show a composition bias toward low complexity. Positions 576-639 (SNEPSSSSTS…TETPMAQSDS (64 aa)) are disordered. Residues 593-609 (DPEEESKSEASFSEEET) are compositionally biased toward acidic residues. The span at 610–630 (ESLKAKAEAPKTEAEPTKTRT) shows a compositional bias: basic and acidic residues. Serine 976 carries the post-translational modification Phosphoserine. The 180-residue stretch at 1143–1322 (PINIPFFDVF…RTCLFYTIRA (180 aa)) folds into the DOC domain. Residue 1363–1370 (AAQALGKT) coordinates ATP. 2 disordered regions span residues 1432–1466 (VEPP…VLPS) and 1664–1685 (DEEE…AEKE). Pro residues predominate over residues 1433–1443 (EPPPGPSPEPS). Residue serine 1457 is modified to Phosphoserine. The stretch at 1649–1691 (LFQLQRLDKLFLEQEDEEEKRLEEEEEEEEEEEAEKELFIEDP) forms a coiled coil. Residues 1664-1683 (DEEEKRLEEEEEEEEEEEAE) show a composition bias toward acidic residues. A Glycyl lysine isopeptide (Lys-Gly) (interchain with G-Cter in NEDD8) cross-link involves residue lysine 1881. The tract at residues 2066–2283 (RPDHCPVCVS…KDYYNCSAMV (218 aa)) is TRIAD supradomain. The Zn(2+) site is built by cysteine 2070, cysteine 2073, cysteine 2088, histidine 2090, cysteine 2093, cysteine 2096, cysteine 2115, cysteine 2120, cysteine 2160, cysteine 2166, cysteine 2181, cysteine 2184, cysteine 2189, cysteine 2192, histidine 2198, cysteine 2203, cysteine 2236, and cysteine 2239. The RING-type 1 zinc finger occupies 2070 to 2120 (CPVCVSPLGCDDDLPSLCCMHYCCKSCWNEYLTTRIEQNLVLNCTCPIADC). The IBR-type zinc finger occupies 2140–2203 (SKYEKALLRG…FPEAHYPASC (64 aa)). The segment at 2236–2265 (CPSCQAPIEKNEGCLHMTCAKCNHGFCWRC) adopts an RING-type 2; atypical zinc-finger fold. The active site involves cysteine 2249. Residues cysteine 2254, cysteine 2257, cysteine 2262, cysteine 2265, histidine 2273, and cysteine 2279 each contribute to the Zn(2+) site. Positions 2365-2385 (VEQQTENLELHTNALQILLEE) form a coiled coil. Serine 2436 is modified (phosphoserine). The interval 2442-2517 (WEAKGPNMPG…EEEDEDEAYD (76 aa)) is disordered. 2 stretches are compositionally biased toward acidic residues: residues 2461-2499 (EAEE…ENLD) and 2506-2517 (GDEEEDEDEAYD).

Belongs to the cullin family. In terms of assembly, component of the Cul9-RING complex consisting of CUL9 and RBX1; the CUL9-RBX1 complex is a heterododecamer composed of six CUL9 and six RBX1 protomers. Interacts (via C-terminal TRIAD/RBR supradomain) with E2 ubiquitin-conjugating enzyme UBE2L3. Interacts with CUL7; the interaction with the CUL7 component of the 3M complex leads to inhibition of CUL9 activity. The CUL7-CUL9 heterodimer seems to interact specifically with TP53, likely via the CPH domain. Forms a complex with p53/TP53 in the cytoplasm of unstressed cells. Interacts with UBCH7 and UBCH8. Autoubiquitinated by the CUL9-RBX1 complex at Lys-87. In terms of processing, neddylated. Neddylation is mediated by E1 enzyme UBA3-NAE1 complex and E2 enzyme UBE2F. Structural rearrangment of the C-terminal TRIAD/RBR supradomain may play a role in neddylation and deneddylation. Ubiquitously expressed in all tissues with highest expression in testis brain and kidney.

The protein localises to the cytoplasm. In terms of biological role, core component of a Cul9-RING ubiquitin-protein ligase complex composed of CUL9 and RBX1. The CUL9-RBX1 complex mediates ubiquitination and subsequent degradation of BIRC5 and is required to maintain microtubule dynamics and genome integrity. Acts downstream of the 3M complex, which inhibits the ubiquitination of BIRC5. The CUL9-RBX1 complex also mediates mono-ubiquitination of p53/TP53. Acts as a cytoplasmic anchor protein in p53/TP53-associated protein complex. Regulates the subcellular localization of p53/TP53 and its subsequent function. Ubiquitinates apurinic/apyrimidinic endodeoxyribonuclease APEX2. Ubiquitination by the CUL9-RBX1 complex is predominantly mediated by E2 ubiquitin-conjugating enzymes UBE2L3 and UBE2D2. The polypeptide is Cullin-9 (CUL9) (Homo sapiens (Human)).